The chain runs to 363 residues: Flagellar P-ring protein (363 aa).

The N-terminal stretch at 1-20 (MKKFTLLLLCFVLPMTSAYA) is a signal peptide.

This sequence belongs to the FlgI family. As to quaternary structure, the basal body constitutes a major portion of the flagellar organelle and consists of four rings (L,P,S, and M) mounted on a central rod.

It is found in the periplasm. The protein localises to the bacterial flagellum basal body. Functionally, assembles around the rod to form the L-ring and probably protects the motor/basal body from shearing forces during rotation. The chain is Flagellar P-ring protein from Vibrio vulnificus (strain YJ016).